A 445-amino-acid polypeptide reads, in one-letter code: von Willebrand factor A domain-containing protein 1 (445 aa).

A signal peptide spans Met-1–Ala-22. A VWFA domain is found at Asp-34–Met-213. Phosphoserine; by FAM20C is present on residues Ser-74 and Ser-80. A Phosphotyrosine modification is found at Tyr-83. Ser-93 bears the Phosphoserine; by FAM20C mark. In terms of domain architecture, Fibronectin type-III 1 spans Arg-214 to Gly-304. Asn-264 carries N-linked (GlcNAc...) asparagine glycosylation. 2 disordered regions span residues Arg-302–Ala-325 and Arg-411–Pro-445. The segment covering Ser-311–Ala-325 has biased composition (low complexity). One can recognise a Fibronectin type-III 2 domain in the interval Gly-334–Pro-427.

Homodimer or homomultimer; disulfide-linked. Interacts with HSPG2. In terms of processing, N-glycosylated.

Its subcellular location is the secreted. It is found in the extracellular space. It localises to the extracellular matrix. The protein resides in the basement membrane. Its function is as follows. Promotes matrix assembly. Involved in the organization of skeletal muscles and in the formation of neuromuscular junctions. The chain is von Willebrand factor A domain-containing protein 1 from Homo sapiens (Human).